The sequence spans 548 residues: Membrane protein insertase YidC (548 aa).

The helical transmembrane segment at 6–26 (NLLVIALLFVSFMIWQAWEQD) threads the bilayer. A disordered region spans residues 28–55 (NPQPQAQQTTQTTTTAAGSAADQGVPAS). Residues 30 to 50 (QPQAQQTTQTTTTAAGSAADQ) show a composition bias toward low complexity. 4 helical membrane passes run 350–370 (FVGNWGFSIIIITFIVRGIMY), 420–440 (LGGCFPLLIQMPIFLALYYML), 458–478 (LSAQDPYYILPILMGVTMFFI), and 499–519 (PVIFTVFFLWFPSGLVLYYIV).

The protein belongs to the OXA1/ALB3/YidC family. Type 1 subfamily. As to quaternary structure, interacts with the Sec translocase complex via SecD. Specifically interacts with transmembrane segments of nascent integral membrane proteins during membrane integration.

It localises to the cell inner membrane. Functionally, required for the insertion and/or proper folding and/or complex formation of integral membrane proteins into the membrane. Involved in integration of membrane proteins that insert both dependently and independently of the Sec translocase complex, as well as at least some lipoproteins. Aids folding of multispanning membrane proteins. The chain is Membrane protein insertase YidC from Shigella boydii serotype 18 (strain CDC 3083-94 / BS512).